We begin with the raw amino-acid sequence, 459 residues long: Ribosomal protein uS12 methylthiotransferase RimO (459 aa).

The region spanning 11-126 (PKVGMVSLGC…VMQAVHSHLP (116 aa)) is the MTTase N-terminal domain. The [4Fe-4S] cluster site is built by C20, C56, C85, C157, C161, and C164. Residues 143-388 (LTPRHYAYLK…MEVAEEVSAA (246 aa)) form the Radical SAM core domain. In terms of domain architecture, TRAM spans 391–459 (ARKVGKTLKV…ADGHDLWGEV (69 aa)).

It belongs to the methylthiotransferase family. RimO subfamily. [4Fe-4S] cluster serves as cofactor.

The protein resides in the cytoplasm. It catalyses the reaction L-aspartate(89)-[ribosomal protein uS12]-hydrogen + (sulfur carrier)-SH + AH2 + 2 S-adenosyl-L-methionine = 3-methylsulfanyl-L-aspartate(89)-[ribosomal protein uS12]-hydrogen + (sulfur carrier)-H + 5'-deoxyadenosine + L-methionine + A + S-adenosyl-L-homocysteine + 2 H(+). In terms of biological role, catalyzes the methylthiolation of an aspartic acid residue of ribosomal protein uS12. This chain is Ribosomal protein uS12 methylthiotransferase RimO, found in Burkholderia pseudomallei (strain K96243).